Here is an 83-residue protein sequence, read N- to C-terminus: Sulfur carrier protein TusA (83 aa).

The Cysteine persulfide intermediate role is filled by Cys19.

This sequence belongs to the sulfur carrier protein TusA family.

It is found in the cytoplasm. Its function is as follows. Sulfur carrier protein which probably makes part of a sulfur-relay system. This is Sulfur carrier protein TusA from Aliivibrio salmonicida (strain LFI1238) (Vibrio salmonicida (strain LFI1238)).